Consider the following 696-residue polypeptide: Methionine synthase reductase (696 aa).

The region spanning 4–147 (FLLLYATQRG…VVEPWIDGLW (144 aa)) is the Flavodoxin-like domain. FMN contacts are provided by residues 10–14 (TQRGQ) and 93–124 (LLGL…QRFY). Residues 166–245 (TLSRASDAPL…SSLSIPAVPP (80 aa)) form a hinge region. Serine 171 and serine 188 each carry phosphoserine. Positions 269–531 (DPSFQVPISK…PRATNAFHLP (263 aa)) constitute an FAD-binding FR-type domain. An NADP(+)-binding site is contributed by lysine 289. FAD is bound by residues 449–452 (RPYS) and 485–488 (GVCT). NADP(+)-binding positions include 608 to 609 (SR), 622 to 624 (YVQ), and aspartate 657. Tryptophan 695 serves as a coordination point for FAD.

In terms of assembly, forms a multiprotein complex with MMACHC, MMADHC and MTR. FAD is required as a cofactor. It depends on FMN as a cofactor.

The protein localises to the cytoplasm. It carries out the reaction 2 methylcob(III)alamin-[methionine synthase] + 2 S-adenosyl-L-homocysteine + NADP(+) + H(+) = 2 cob(II)alamin-[methionine synthase] + 2 S-adenosyl-L-methionine + NADPH. The enzyme catalyses 2 cob(II)alamin + A + 2 H2O + 2 H(+) = 2 aquacob(III)alamin + AH2. Key enzyme in methionine and folate homeostasis responsible for the reactivation of methionine synthase (MTR/MS) activity by catalyzing the reductive methylation of MTR-bound cob(II)alamin. Cobalamin (vitamin B12) forms a complex with MTR to serve as an intermediary in methyl transfer reactions that cycles between MTR-bound methylcob(III)alamin and MTR bound-cob(I)alamin forms, and occasional oxidative escape of the cob(I)alamin intermediate during the catalytic cycle leads to the inactive cob(II)alamin species. The processing of cobalamin in the cytosol occurs in a multiprotein complex composed of at least MMACHC, MMADHC, MTRR and MTR which may contribute to shuttle safely and efficiently cobalamin towards MTR in order to produce methionine. Also necessary for the utilization of methyl groups from the folate cycle, thereby affecting transgenerational epigenetic inheritance. Also acts as a molecular chaperone for methionine synthase by stabilizing apoMTR and incorporating methylcob(III)alamin into apoMTR to form the holoenzyme. Also serves as an aquacob(III)alamin reductase by reducing aquacob(III)alamin to cob(II)alamin; this reduction leads to stimulation of the conversion of apoMTR and aquacob(III)alamin to MTR holoenzyme. This chain is Methionine synthase reductase, found in Mus musculus (Mouse).